The chain runs to 546 residues: Cysteine--tRNA ligase (546 aa).

C57 serves as a coordination point for Zn(2+). Residues 59–69 (ATVQSSPHIGH) carry the 'HIGH' region motif. The segment at 211–236 (PSVDATGADKYNPVDPADASPDKHDP) is disordered. Zn(2+) is bound by residues C270, H295, and E299. The 'KMSKS' region signature appears at 326-330 (KMSKS). K329 contributes to the ATP binding site.

Belongs to the class-I aminoacyl-tRNA synthetase family. In terms of assembly, monomer. Zn(2+) serves as cofactor.

The protein resides in the cytoplasm. The catalysed reaction is tRNA(Cys) + L-cysteine + ATP = L-cysteinyl-tRNA(Cys) + AMP + diphosphate. The protein is Cysteine--tRNA ligase of Bifidobacterium longum (strain NCC 2705).